The primary structure comprises 250 residues: Cell division protein ZapD (250 aa).

It belongs to the ZapD family. Interacts with FtsZ.

It is found in the cytoplasm. Its function is as follows. Cell division factor that enhances FtsZ-ring assembly. Directly interacts with FtsZ and promotes bundling of FtsZ protofilaments, with a reduction in FtsZ GTPase activity. The sequence is that of Cell division protein ZapD from Photorhabdus laumondii subsp. laumondii (strain DSM 15139 / CIP 105565 / TT01) (Photorhabdus luminescens subsp. laumondii).